Here is a 160-residue protein sequence, read N- to C-terminus: Thialysine N-epsilon-acetyltransferase (160 aa).

The N-acetyltransferase domain occupies Phe4–Asp159. Residues Leu84 to Ile86, Arg92 to Arg97, Asn123 to Ala126, and Tyr130 to Val133 contribute to the acetyl-CoA site.

Belongs to the acetyltransferase family. Homodimer.

The enzyme catalyses S-(2-aminoethyl)-L-cysteine + acetyl-CoA = S-(2-acetamidoethyl)-L-cysteine + CoA + H(+). The catalysed reaction is O-(2-aminoethyl)-L-serine + acetyl-CoA = O-(2-acetamidoethyl)-L-serine + CoA + H(+). It carries out the reaction S-(2-aminoethyl)-homocysteine + acetyl-CoA = S-(2-acetamidoethyl)-homocysteine + CoA + H(+). In terms of biological role, catalyzes the N-acetylation of the amino acid thialysine (S-(2-aminoethyl)-L-cysteine), a L-lysine analog with the 4-methylene group substituted with a sulfur. Substrate specificity: thialysine &gt; O-(2-aminoethyl)-L-serine &gt; S-(2-aminoethyl)-D,L-homocysteine. Does not act on polyamines, such as spermidine and spermine, nor on diamines putrescine and cadaverine. This Caenorhabditis elegans protein is Thialysine N-epsilon-acetyltransferase.